The following is a 781-amino-acid chain: Catalase-peroxidase (781 aa).

Positions 1–20 (MLYIYYLFKSLFFHTLFVFS) are cleaved as a signal peptide. The tryptophyl-tyrosyl-methioninium (Trp-Tyr) (with M-298) cross-link spans 125–272 (WHSAGTYRIG…LAAVQMGLIY (148 aa)). Histidine 126 acts as the Proton acceptor in catalysis. Residues 237 to 256 (VHHPDEHRGAKEKAAKNSDS) form a disordered region. Positions 272-298 (YVNPEGPDGRPDPLASARDIRETFARM) form a cross-link, tryptophyl-tyrosyl-methioninium (Tyr-Met) (with W-125). Residue histidine 313 participates in heme b binding. Positions 317-336 (KTHGAAPADNVGPEPEAGEL) are disordered.

Belongs to the peroxidase family. Peroxidase/catalase subfamily. In terms of assembly, homodimer or homotetramer. Requires heme b as cofactor. Post-translationally, formation of the three residue Trp-Tyr-Met cross-link is important for the catalase, but not the peroxidase activity of the enzyme.

It carries out the reaction H2O2 + AH2 = A + 2 H2O. The catalysed reaction is 2 H2O2 = O2 + 2 H2O. In terms of biological role, bifunctional enzyme with both catalase and broad-spectrum peroxidase activity. The chain is Catalase-peroxidase from Xylella fastidiosa (strain 9a5c).